The chain runs to 384 residues: Lipid-A-disaccharide synthase 1 (384 aa).

The protein belongs to the LpxB family.

The catalysed reaction is a lipid X + a UDP-2-N,3-O-bis[(3R)-3-hydroxyacyl]-alpha-D-glucosamine = a lipid A disaccharide + UDP + H(+). It participates in bacterial outer membrane biogenesis; LPS lipid A biosynthesis. Condensation of UDP-2,3-diacylglucosamine and 2,3-diacylglucosamine-1-phosphate to form lipid A disaccharide, a precursor of lipid A, a phosphorylated glycolipid that anchors the lipopolysaccharide to the outer membrane of the cell. In Legionella pneumophila (strain Lens), this protein is Lipid-A-disaccharide synthase 1.